The following is a 61-amino-acid chain: HSSNDFCYLPAVRGRCRGYFPRYFFSSETGKCERFIYGGCGGNRNNFESAQECGSTCYPRE.

Residues 7–57 (CYLPAVRGRCRGYFPRYFFSSETGKCERFIYGGCGGNRNNFESAQECGSTC) enclose the BPTI/Kunitz inhibitor domain. 3 disulfides stabilise this stretch: Cys-7-Cys-57, Cys-16-Cys-40, and Cys-32-Cys-53.

The protein resides in the secreted. Its subcellular location is the nematocyst. Protease inhibitor. The sequence is that of PI-actitoxin-Axm2b from Anthopleura aff. xanthogrammica (Sea anemone).